Reading from the N-terminus, the 275-residue chain is Elongation factor Ts (275 aa).

The interval 76–79 is involved in Mg(2+) ion dislocation from EF-Tu; it reads TDFV.

The protein belongs to the EF-Ts family.

The protein localises to the cytoplasm. Associates with the EF-Tu.GDP complex and induces the exchange of GDP to GTP. It remains bound to the aminoacyl-tRNA.EF-Tu.GTP complex up to the GTP hydrolysis stage on the ribosome. This chain is Elongation factor Ts, found in Rhodococcus jostii (strain RHA1).